The following is an 837-amino-acid chain: ABC transporter A family member 8 (837 aa).

A run of 7 helical transmembrane segments spans residues 29-49 (YFST…FYII), 244-264 (VVSL…FIFL), 303-323 (LIIC…FFLG), 326-346 (FLVL…MAFF), 356-376 (VAIG…LTFN), 393-413 (GAAF…SKVL), and 455-475 (LAYM…IEYA). The region spanning 516–750 (IRGLSKTFNK…YGEGYSVQVI (235 aa)) is the ABC transporter domain. 553–560 (GSNGAGKS) serves as a coordination point for ATP.

Belongs to the ABC transporter superfamily. ABCA family.

The protein resides in the membrane. The protein is ABC transporter A family member 8 (abcA8) of Dictyostelium discoideum (Social amoeba).